Consider the following 349-residue polypeptide: N-acetyltaurine hydrolase (349 aa).

Residues His26, His28, Glu169, His201, His230, and Asp298 each contribute to the a divalent metal cation site.

The protein belongs to the metallo-dependent hydrolases superfamily. Phosphotriesterase family. A divalent metal cation serves as cofactor. As to expression, expressed in the kidney, liver and brainstem.

The protein resides in the cytoplasm. It is found in the cytosol. It catalyses the reaction N-acetyltaurine + H2O = taurine + acetate. It carries out the reaction N-propanoyltaurine + H2O = propanoate + taurine. The catalysed reaction is N-acetyl-L-methionine + H2O = L-methionine + acetate. The enzyme catalyses N-acetyl-L-isoleucine + H2O = L-isoleucine + acetate. It catalyses the reaction N-acetyl-L-leucine + H2O = L-leucine + acetate. It carries out the reaction N-acetyl-L-valine + H2O = L-valine + acetate. Functionally, N-acetyltaurine hydrolase that regulates feeding by catalyzing the hydrolysis of N-acetyltaurine into taurine and acetate. N-acetyltaurine has anorexigenic and anti-obesity effects that are dependent on GFRAL receptor and GDF15. PTER also acts on other N-acetyl amino acids (Met, Ile, Leu, Val) and N-propionyltaurine, but at lower rates. The sequence is that of N-acetyltaurine hydrolase from Mus musculus (Mouse).